Reading from the N-terminus, the 494-residue chain is Nicotianamine aminotransferase 1 (494 aa).

2 stretches are compositionally biased toward low complexity: residues 24 to 38 (SGTSYPTRTTTTSSS) and 48 to 62 (STAMAPTTAAAAASS). A disordered region spans residues 24–76 (SGTSYPTRTTTTSSSAPEFTNKKQSTAMAPTTAAAAASSNGGGESDGSSKEWR). Lysine 322 is subject to N6-(pyridoxal phosphate)lysine.

It belongs to the class-I pyridoxal-phosphate-dependent aminotransferase family. It depends on pyridoxal 5'-phosphate as a cofactor. Expressed in companion and pericycle cells adjacent to the protoxylem of roots. Expressed in companion cells of shoots.

It carries out the reaction nicotianamine + 2-oxoglutarate = 3''-deamino-3''-oxonicotianamine + L-glutamate. In terms of biological role, involved in biosynthesis of mugineic acid family phytosiderophores, which are ferric iron chelators produced in graminaceous plants in response to iron deficiency. In Oryza sativa subsp. japonica (Rice), this protein is Nicotianamine aminotransferase 1.